The primary structure comprises 511 residues: U3 snoRNP-associated protein-like YAOH (511 aa).

The span at 1–18 (MAPRPRKRVSRPKPRATS) shows a compositional bias: basic residues. The tract at residues 1–117 (MAPRPRKRVS…EDEDEGEEAG (117 aa)) is disordered. 2 stretches are compositionally biased toward acidic residues: residues 44–53 (EDIESEDSDL) and 66–80 (DDGEEEEEEEEEQET). The span at 81–105 (AGEKKMRIAKELLKKVTDAARRRRE) shows a compositional bias: basic and acidic residues. 7 WD repeats span residues 158 to 197 (KHRQPVTAVVLSKDSDKGFSASKDGVIVHWDVETGKSEKY), 217 to 256 (KRSKQVLALAVSADGRYLASGGLDRHIHLWDVRSREHIQA), 259 to 298 (GHRGAISCLSFGPDSSELFSGSFDRKIMQWNAEDRTYMNC), 301 to 339 (GHQNEVLTMDALSKDRLLTVARDRTMHLWKIPEESQLLF), 342 to 380 (PATASLECCCFIDDKEFLTGSDDGSVELWSIMRKKPTHI), 412 to 451 (SAQSWVSAIAARRGSDLAASGAANGSVRLWAIEPDSKGIR), and 457 to 497 (RLDG…QNGV).

This sequence belongs to the WD repeat RRP9 family.

It localises to the nucleus. Its subcellular location is the nucleolus. In terms of biological role, component of a nucleolar small nuclear ribonucleoprotein particle (snoRNP) thought to participate in the processing and modification of pre-ribosomal RNA. Essential for embryogenesis. The protein is U3 snoRNP-associated protein-like YAOH of Oryza sativa subsp. japonica (Rice).